A 24-amino-acid polypeptide reads, in one-letter code: Brevinin-1HSa (24 aa).

A disulfide bridge connects residues C18 and C24.

As to expression, expressed by the skin glands.

It localises to the secreted. Has antibacterial activity against the Gram-positive bacterium S.aureus ATCC 25923 (MIC=3 uM) and the Gram-negative bacterium E.coli ATCC 25726 (MIC=24 uM). The chain is Brevinin-1HSa from Odorrana hosii (Hose's rock frog).